A 1026-amino-acid polypeptide reads, in one-letter code: UPF0182 protein FRAAL6027 (1026 aa).

7 helical membrane passes run 13–33, 60–80, 108–128, 167–187, 208–228, 250–270, and 283–303; these read AKVI…VAIF, ILLF…NIVL, YMKL…GLSA, FLLG…VLTH, AHIS…YYLD, AVLP…VLFI, and LGAG…PAFI. Low complexity predominate over residues 877–888; sequence AAAGAGTGATTT. Disordered regions lie at residues 877 to 916 and 958 to 1026; these read AAAG…LQDA and LASP…PPPG. Residues 889–903 are compositionally biased toward gly residues; sequence TGGGGQATTQGGGTG. Residues 970–1001 show a composition bias toward low complexity; the sequence is PTPSRSAAPTTRGTAAGSAPPGTTPAVAAPAG. A compositionally biased stretch (pro residues) spans 1016–1026; the sequence is PQQPRAAPPPG.

Belongs to the UPF0182 family.

The protein localises to the cell membrane. This chain is UPF0182 protein FRAAL6027, found in Frankia alni (strain DSM 45986 / CECT 9034 / ACN14a).